The following is a 1074-amino-acid chain: Phospholipase D1 (1074 aa).

The region spanning 81-212 is the PX domain; it reads VKAQVLEVER…TEFLDVSQLS (132 aa). Residues 219 to 328 form the PH domain; it reads PKGLEGMIMK…WGGAIEEFIQ (110 aa). Residues Cys-240 and Cys-241 are each lipidated (S-palmitoyl cysteine). In terms of domain architecture, PLD phosphodiesterase 1 spans 459–486; that stretch reads YLWAHHEKLVIIDQSVAFVGGIDLAYGR. A catalytic region spans residues 463-928; that stretch reads HHEKLVIIDQ…MLGKRDSEMA (466 aa). Phosphoserine is present on residues Ser-499, Ser-561, and Ser-629. The PLD phosphodiesterase 2 domain maps to 891–918; that stretch reads ELIYVHSKLLIADDNTVIIGSANINDRS.

This sequence belongs to the phospholipase D family. In terms of assembly, interacts with PIP5K1B. Phosphorylated on serine and threonine residues. Post-translationally, it is uncertain whether palmitoylation is on Cys-240 and/or Cys-241. Palmitoylation is required prior to phosphorylation.

It localises to the cytoplasm. The protein localises to the perinuclear region. It is found in the endoplasmic reticulum membrane. Its subcellular location is the golgi apparatus membrane. The protein resides in the late endosome membrane. It catalyses the reaction a 1,2-diacyl-sn-glycero-3-phosphocholine + H2O = a 1,2-diacyl-sn-glycero-3-phosphate + choline + H(+). The catalysed reaction is ethanol + a 1,2-diacyl-sn-glycero-3-phosphocholine = 1,2-diacyl-sn-glycero-3-phosphoethanol + choline. The enzyme catalyses 1,2-dihexadecanoyl-sn-glycero-3-phosphocholine + H2O = 1,2-dihexadecanoyl-sn-glycero-3-phosphate + choline + H(+). With respect to regulation, stimulated by phosphatidylinositol 4,5-bisphosphate and phosphatidylinositol 3,4,5-trisphosphate, activated by the phosphokinase C-alpha, by the ADP-ribosylation factor-1 (ARF-1), and to a lesser extent by GTP-binding proteins: RHO A, RAC-1 and CDC42. Inhibited by oleate. Its function is as follows. Function as phospholipase selective for phosphatidylcholine. Implicated as a critical step in numerous cellular pathways, including signal transduction, membrane trafficking, and the regulation of mitosis. May be involved in the regulation of perinuclear intravesicular membrane traffic. This Rattus norvegicus (Rat) protein is Phospholipase D1.